We begin with the raw amino-acid sequence, 229 residues long: Glycerol-3-phosphate acyltransferase (229 aa).

6 helical membrane passes run 2 to 22 (WSLT…GALW), 56 to 76 (LATV…ASVI), 93 to 113 (FVVL…YPIF), 129 to 149 (LFAL…AVLL), 151 to 171 (SRYV…IVAL), and 178 to 198 (ADLD…IVVA).

It belongs to the PlsY family. As to quaternary structure, probably interacts with PlsX.

Its subcellular location is the cell inner membrane. It carries out the reaction an acyl phosphate + sn-glycerol 3-phosphate = a 1-acyl-sn-glycero-3-phosphate + phosphate. Its pathway is lipid metabolism; phospholipid metabolism. Its function is as follows. Catalyzes the transfer of an acyl group from acyl-phosphate (acyl-PO(4)) to glycerol-3-phosphate (G3P) to form lysophosphatidic acid (LPA). This enzyme utilizes acyl-phosphate as fatty acyl donor, but not acyl-CoA or acyl-ACP. This Salinibacter ruber (strain DSM 13855 / M31) protein is Glycerol-3-phosphate acyltransferase.